A 366-amino-acid chain; its full sequence is Chorismate synthase (366 aa).

Positions 48 and 54 each coordinate NADP(+). Residues 125–127 (RSS), 238–239 (NA), glycine 278, 293–297 (KPTSS), and arginine 319 contribute to the FMN site.

Belongs to the chorismate synthase family. As to quaternary structure, homotetramer. The cofactor is FMNH2.

The catalysed reaction is 5-O-(1-carboxyvinyl)-3-phosphoshikimate = chorismate + phosphate. Its pathway is metabolic intermediate biosynthesis; chorismate biosynthesis; chorismate from D-erythrose 4-phosphate and phosphoenolpyruvate: step 7/7. In terms of biological role, catalyzes the anti-1,4-elimination of the C-3 phosphate and the C-6 proR hydrogen from 5-enolpyruvylshikimate-3-phosphate (EPSP) to yield chorismate, which is the branch point compound that serves as the starting substrate for the three terminal pathways of aromatic amino acid biosynthesis. This reaction introduces a second double bond into the aromatic ring system. The chain is Chorismate synthase from Paraburkholderia xenovorans (strain LB400).